A 122-amino-acid polypeptide reads, in one-letter code: Secreted RxLR effector protein 80 (122 aa).

An N-terminal signal peptide occupies residues 1 to 21 (MKKRALPIVIFVISLQQSSQS). A RxLR motif is present at residues 72–75 (RSLR).

The protein belongs to the RxLR effector family.

It is found in the secreted. The protein localises to the host endoplasmic reticulum membrane. Its function is as follows. Secreted effector that dos not suppress the host cell death induced by cell death-inducing proteins. This is Secreted RxLR effector protein 80 from Plasmopara viticola (Downy mildew of grapevine).